Here is a 266-residue protein sequence, read N- to C-terminus: 3-methyl-2-oxobutanoate hydroxymethyltransferase (266 aa).

2 residues coordinate Mg(2+): aspartate 45 and aspartate 84. 3-methyl-2-oxobutanoate is bound by residues 45 to 46 (DS), aspartate 84, and lysine 112. A Mg(2+)-binding site is contributed by glutamate 114. Catalysis depends on glutamate 181, which acts as the Proton acceptor.

The protein belongs to the PanB family. In terms of assembly, homodecamer; pentamer of dimers. Mg(2+) serves as cofactor.

Its subcellular location is the cytoplasm. The enzyme catalyses 3-methyl-2-oxobutanoate + (6R)-5,10-methylene-5,6,7,8-tetrahydrofolate + H2O = 2-dehydropantoate + (6S)-5,6,7,8-tetrahydrofolate. The protein operates within cofactor biosynthesis; (R)-pantothenate biosynthesis; (R)-pantoate from 3-methyl-2-oxobutanoate: step 1/2. Functionally, catalyzes the reversible reaction in which hydroxymethyl group from 5,10-methylenetetrahydrofolate is transferred onto alpha-ketoisovalerate to form ketopantoate. This chain is 3-methyl-2-oxobutanoate hydroxymethyltransferase, found in Pseudomonas fluorescens (strain SBW25).